Here is an 86-residue protein sequence, read N- to C-terminus: Kappa-theraphotoxin-Cg1a 1 (86 aa).

A signal peptide spans 1 to 21 (MKVSVLITLAVLGVMFVWASA). Residues 22-50 (AELEERGSDQRDSPAWLKSMERIFQSGER) constitute a propeptide that is removed on maturation. 3 disulfide bridges follow: Cys-52-Cys-66, Cys-59-Cys-71, and Cys-65-Cys-78. An involved in active face region spans residues 55–56 (MF). Residue Phe-84 is modified to Phenylalanine amide.

It belongs to the neurotoxin 10 (Hwtx-1) family. 28 (Jztx-11) subfamily. As to expression, expressed by the venom gland.

It localises to the secreted. Functionally, this toxin acts as a voltage-dependent gating-modifier. It inhibits the sodium conductance (IC(50)=124 nM) and slows the fast inactivation (EC(50)=1180 nM) of Nav1.5/SCN5A. It significantly shifts the activation to more depolarized voltages and decreases the deactivation of Nav1.5 currents upon extreme depolarization, but only slightly affects voltage-dependence of steady-state inactivation. In addition, this toxin causes an approximately five-fold decrease in the rate of recovery from inactivation and an approximately 1.9-fold reduction in the closed-state inactivation rate. This toxin integrates the functions of site 3 toxins (alpha-scorpion toxins) with site 4 toxins (beta-scorpion and spider toxins) by targeting multiple sites on Nav1.5. Also shows inhibition of voltage-gated potassium channels (5 uM completely inhibits Kv2.1/KCNB1, whereas 5 uM moderately inhibits Kv4.2/KCND2 Kv4.1/KCND1 channels). The sequence is that of Kappa-theraphotoxin-Cg1a 1 from Chilobrachys guangxiensis (Chinese earth tiger tarantula).